A 469-amino-acid polypeptide reads, in one-letter code: Neuraminidase (469 aa).

Topologically, residues 1-6 (MNPNQK) are intravirion. A helical membrane pass occupies residues 7–27 (IITIGSICMVVGIISLILQIG). The involved in apical transport and lipid raft association stretch occupies residues 11 to 33 (GSICMVVGIISLILQIGNIISIW). The Virion surface portion of the chain corresponds to 28–469 (NIISIWISHS…GAELPFTIDK (442 aa)). The segment at 36-90 (HSIQTGSQNHTGICNQSIITYKNSTWVNQTYVNISNTNVVAGKGTTPVILAGNSS) is hypervariable stalk region. N-linked (GlcNAc...) asparagine; by host glycosylation is found at Asn-44, Asn-50, Asn-58, Asn-63, Asn-68, and Asn-88. Residues 91–469 (LCPIRGWAIY…GAELPFTIDK (379 aa)) are head of neuraminidase. Cystine bridges form between Cys-92/Cys-417, Cys-124/Cys-129, Cys-184/Cys-231, Cys-233/Cys-238, Cys-279/Cys-292, Cys-281/Cys-290, Cys-318/Cys-335, and Cys-421/Cys-446. Arg-118 is a substrate binding site. Residue Asn-146 is glycosylated (N-linked (GlcNAc...) asparagine; by host). Asp-151 serves as the catalytic Proton donor/acceptor. A substrate-binding site is contributed by Arg-152. N-linked (GlcNAc...) asparagine; by host glycosylation occurs at Asn-235. 277–278 (EE) contacts substrate. Arg-293 is a binding site for substrate. Ca(2+)-binding residues include Asp-294, Gly-298, Asp-324, and Asn-344. An N-linked (GlcNAc...) asparagine; by host glycan is attached at Asn-365. Arg-368 serves as a coordination point for substrate. Tyr-402 (nucleophile) is an active-site residue.

Belongs to the glycosyl hydrolase 34 family. As to quaternary structure, homotetramer. The cofactor is Ca(2+). Post-translationally, N-glycosylated.

Its subcellular location is the virion membrane. It is found in the host apical cell membrane. The enzyme catalyses Hydrolysis of alpha-(2-&gt;3)-, alpha-(2-&gt;6)-, alpha-(2-&gt;8)- glycosidic linkages of terminal sialic acid residues in oligosaccharides, glycoproteins, glycolipids, colominic acid and synthetic substrates.. Its activity is regulated as follows. Inhibited by the neuraminidase inhibitors zanamivir (Relenza) and oseltamivir (Tamiflu). These drugs interfere with the release of progeny virus from infected cells and are effective against all influenza strains. Resistance to neuraminidase inhibitors is quite rare. Functionally, catalyzes the removal of terminal sialic acid residues from viral and cellular glycoconjugates. Cleaves off the terminal sialic acids on the glycosylated HA during virus budding to facilitate virus release. Additionally helps virus spread through the circulation by further removing sialic acids from the cell surface. These cleavages prevent self-aggregation and ensure the efficient spread of the progeny virus from cell to cell. Otherwise, infection would be limited to one round of replication. Described as a receptor-destroying enzyme because it cleaves a terminal sialic acid from the cellular receptors. May facilitate viral invasion of the upper airways by cleaving the sialic acid moieties on the mucin of the airway epithelial cells. Likely to plays a role in the budding process through its association with lipid rafts during intracellular transport. May additionally display a raft-association independent effect on budding. Plays a role in the determination of host range restriction on replication and virulence. Sialidase activity in late endosome/lysosome traffic seems to enhance virus replication. The polypeptide is Neuraminidase (Influenza A virus (strain A/USA:Huston/AA/1945 H1N1)).